A 1154-amino-acid polypeptide reads, in one-letter code: DNA-directed RNA polymerase subunit beta' (1154 aa).

Cysteine 60, cysteine 62, cysteine 75, and cysteine 78 together coordinate Zn(2+). Residues aspartate 449, aspartate 451, and aspartate 453 each contribute to the Mg(2+) site. 4 residues coordinate Zn(2+): cysteine 774, cysteine 848, cysteine 855, and cysteine 858.

The protein belongs to the RNA polymerase beta' chain family. As to quaternary structure, the RNAP catalytic core consists of 2 alpha, 1 beta, 1 beta' and 1 omega subunit. When a sigma factor is associated with the core the holoenzyme is formed, which can initiate transcription. The cofactor is Mg(2+). It depends on Zn(2+) as a cofactor.

It catalyses the reaction RNA(n) + a ribonucleoside 5'-triphosphate = RNA(n+1) + diphosphate. Its function is as follows. DNA-dependent RNA polymerase catalyzes the transcription of DNA into RNA using the four ribonucleoside triphosphates as substrates. In Desulforudis audaxviator (strain MP104C), this protein is DNA-directed RNA polymerase subunit beta'.